The sequence spans 487 residues: Cysteine--tRNA ligase (487 aa).

Cys-29 serves as a coordination point for Zn(2+). Residues 31–41 (VTVYDFCHIGH) carry the 'HIGH' region motif. The Zn(2+) site is built by Cys-209, His-234, and Glu-238. Positions 266-270 (KMSKS) match the 'KMSKS' region motif. Lys-269 is a binding site for ATP.

Belongs to the class-I aminoacyl-tRNA synthetase family. In terms of assembly, monomer. Requires Zn(2+) as cofactor.

The protein localises to the cytoplasm. It catalyses the reaction tRNA(Cys) + L-cysteine + ATP = L-cysteinyl-tRNA(Cys) + AMP + diphosphate. This is Cysteine--tRNA ligase from Trichlorobacter lovleyi (strain ATCC BAA-1151 / DSM 17278 / SZ) (Geobacter lovleyi).